A 280-amino-acid chain; its full sequence is Elongation factor 1-delta (280 aa).

An N-acetylalanine modification is found at A2. Position 17 is an N6-acetyllysine (K17). Phosphoserine is present on residues S37, S44, S60, S86, and S106. K107 bears the N6-acetyllysine mark. The segment at 113–171 is disordered; the sequence is SALEKSSPAHRATTPQTQHVSPMRQVEPPSRKAATATEDDEDDDIDLFGSDEEEDKEAT. K117 bears the N6-acetyllysine; alternate mark. An N6-succinyllysine; alternate modification is found at K117. Phosphoserine is present on S119. At T129 the chain carries Phosphothreonine. The residue at position 133 (S133) is a Phosphoserine. T147 bears the Phosphothreonine mark. Positions 149–168 are enriched in acidic residues; sequence TEDDEDDDIDLFGSDEEEDK. Phosphoserine; by CK2 is present on S162.

The protein belongs to the EF-1-beta/EF-1-delta family. In terms of assembly, EF-1 is composed of 4 subunits: alpha, beta, delta, and gamma.

Its function is as follows. EF-1-beta and EF-1-delta stimulate the exchange of GDP bound to EF-1-alpha to GTP. The chain is Elongation factor 1-delta (EEF1D) from Bos taurus (Bovine).